The sequence spans 162 residues: Peptidyl-prolyl cis-trans isomerase (162 aa).

The PPIase cyclophilin-type domain occupies 16–162 (KTAYATIKTN…IESVVFSPSL (147 aa)).

This sequence belongs to the cyclophilin-type PPIase family.

It catalyses the reaction [protein]-peptidylproline (omega=180) = [protein]-peptidylproline (omega=0). Its function is as follows. PPIases accelerate the folding of proteins. It catalyzes the cis-trans isomerization of proline imidic peptide bonds in oligopeptides. This is Peptidyl-prolyl cis-trans isomerase (ppiA) from Helicobacter pylori (strain J99 / ATCC 700824) (Campylobacter pylori J99).